A 1063-amino-acid chain; its full sequence is Alkane uptake protein B (1063 aa).

The first 17 residues, M1 to A17, serve as a signal peptide directing secretion. C18 carries the N-palmitoyl cysteine lipid modification. A lipid anchor (S-diacylglycerol cysteine) is attached at C18.

In terms of assembly, interacts with the outer membrane protein AupA.

It localises to the cell inner membrane. Functionally, required for growth on alkanes. Probably involved in the uptake of micelle-solubilized alkanes. May facilitate the transfer of alkanes from the outer membrane to the inner membrane. This Marinobacter nauticus (strain ATCC 49840 / DSM 8798 / CIP 103578 / SP17) (Marinobacter hydrocarbonoclasticus) protein is Alkane uptake protein B.